Consider the following 249-residue polypeptide: 3-deoxy-manno-octulosonate cytidylyltransferase (249 aa).

This sequence belongs to the KdsB family.

It is found in the cytoplasm. It carries out the reaction 3-deoxy-alpha-D-manno-oct-2-ulosonate + CTP = CMP-3-deoxy-beta-D-manno-octulosonate + diphosphate. Its pathway is nucleotide-sugar biosynthesis; CMP-3-deoxy-D-manno-octulosonate biosynthesis; CMP-3-deoxy-D-manno-octulosonate from 3-deoxy-D-manno-octulosonate and CTP: step 1/1. The protein operates within bacterial outer membrane biogenesis; lipopolysaccharide biosynthesis. In terms of biological role, activates KDO (a required 8-carbon sugar) for incorporation into bacterial lipopolysaccharide in Gram-negative bacteria. The sequence is that of 3-deoxy-manno-octulosonate cytidylyltransferase from Photorhabdus laumondii subsp. laumondii (strain DSM 15139 / CIP 105565 / TT01) (Photorhabdus luminescens subsp. laumondii).